The chain runs to 145 residues: Transcriptional regulator MraZ (145 aa).

2 SpoVT-AbrB domains span residues 7–54 and 83–126; these read NATN…GPDL and GVFM…QPQA.

Belongs to the MraZ family. As to quaternary structure, forms oligomers.

It localises to the cytoplasm. The protein resides in the nucleoid. This is Transcriptional regulator MraZ from Rhizobium leguminosarum bv. trifolii (strain WSM2304).